The following is a 277-amino-acid chain: MNIKKWIKKSIQKLSHVDNPKFESELLLSYVTKHTRSFIISSDEIQLTEKQYKYLNHLIHRRSLGEPIAYIIKEKEFWSLSLCVSYDTLIPRPDTEILVERALSKIKSNSACILDLGTGCGAIALALASINSNWNIIGIDKSENALAIARINASKLNFKNVTFFFSDWFLNIKKKFNIIVSNPPYVSKKEIKFFKKDIFFEPLSALISDNNGLSDIENIIKNSKHYLFYGGWLMIEHGWRQKVKVQYLFKKYNFHEIESYQDYGGNDRVTIGKKYDK.

S-adenosyl-L-methionine contacts are provided by residues Gly-117–Gly-121, Asp-140, Trp-168, and Asn-182. Residue Asn-182 to Tyr-185 participates in substrate binding.

It belongs to the protein N5-glutamine methyltransferase family. PrmC subfamily.

The catalysed reaction is L-glutaminyl-[peptide chain release factor] + S-adenosyl-L-methionine = N(5)-methyl-L-glutaminyl-[peptide chain release factor] + S-adenosyl-L-homocysteine + H(+). In terms of biological role, methylates the class 1 translation termination release factors RF1/PrfA and RF2/PrfB on the glutamine residue of the universally conserved GGQ motif. In Buchnera aphidicola subsp. Acyrthosiphon pisum (strain APS) (Acyrthosiphon pisum symbiotic bacterium), this protein is Release factor glutamine methyltransferase.